Here is a 310-residue protein sequence, read N- to C-terminus: Olfactory receptor 8G3 (310 aa).

Residues 1 to 25 (MDPGNHSSVTESILAGLSEQPELQL) lie on the Extracellular side of the membrane. N-linked (GlcNAc...) asparagine glycosylation is present at N5. A helical membrane pass occupies residues 26 to 46 (RLFLLFLGICVVTVVGNLGMI). Residues 47-54 (TLIGLSSH) are Cytoplasmic-facing. A helical membrane pass occupies residues 55–75 (LHTPMYYFLSSLSFIDFCHST). Residues 76–99 (VITPKMLVNFATEKNIISYPECMA) are Extracellular-facing. C97 and C189 form a disulfide bridge. The helical transmembrane segment at 100–120 (QLYLFSIFAIAECHMLAAMAY) threads the bilayer. Residues 121-139 (DCYVAICSPLLYNVIMSYH) are Cytoplasmic-facing. A helical membrane pass occupies residues 140–160 (HCFWLTVGVYILGILGSTIHT). Over 161-197 (SFMLRLFLCKTNVINHYFCDLFPLLGLSCSSTYINEL) the chain is Extracellular. Residues 198-217 (LVLVLSAFNILMPALTILAS) form a helical membrane-spanning segment. Residues 218–237 (YIFIIASILRIHSTEGRSKA) lie on the Cytoplasmic side of the membrane. The chain crosses the membrane as a helical span at residues 238–258 (FSTCSSHILAVAVFFGSAAFM). Topologically, residues 259–271 (YLQPSSVSSMDQR) are extracellular. The helical transmembrane segment at 272–292 (KVSSVFYTTIVPMLNPLIYSL) threads the bilayer. Over 293–310 (RNKDVKLAVKKILHQTAC) the chain is Cytoplasmic.

It belongs to the G-protein coupled receptor 1 family.

The protein localises to the cell membrane. In terms of biological role, odorant receptor. In Homo sapiens (Human), this protein is Olfactory receptor 8G3.